A 591-amino-acid polypeptide reads, in one-letter code: NADPH oxidase 1 (591 aa).

Residues 1–36 (MAGELRGSRGPLQRIQIAPREAPNLHLTMGNWLVNH) are Cytoplasmic-facing. Residues 37–59 (WLSVLFLVSWLGLNIFLFVYAFL) traverse the membrane as a helical segment. The Extracellular segment spans residues 60–72 (NYEKSDKYYYTRE). The helical transmembrane segment at 73-97 (ILGTALALARASALCLNFNSMMILI) threads the bilayer. One can recognise a Ferric oxidoreductase domain in the interval 82-316 (RASALCLNFN…YIFERILRFY (235 aa)). Topologically, residues 98–130 (PVCRNLLSFLRGTCSFCNRTLRKPLDHNLTFHK) are cytoplasmic. H129 and H143 together coordinate heme. The chain crosses the membrane as a helical span at residues 131–151 (LVAYMICIFTVIHIIAHLFNF). Residues 152-195 (ERYRRSQQAMDGSLASVLSSLSHPEKEDSWLNPIQSPNMTVMYA) are Extracellular-facing. N-linked (GlcNAc...) asparagine glycosylation occurs at N189. The helical transmembrane segment at 196 to 216 (AFTSIAGLTGVIATVALVLMV) threads the bilayer. Residues 217-234 (TSAMEFIRRNYFELFWYT) are Cytoplasmic-facing. The helical transmembrane segment at 235-255 (HHLFIVYIICLGIHGLGGIVR) threads the bilayer. Residues H236 and H248 each coordinate heme. At 256–423 (GQTEESLGES…TVSEDVFQYE (168 aa)) the chain is on the extracellular side. An N-linked (GlcNAc...) asparagine glycan is attached at N269. Residues 317–418 (RSQQKVVITK…DGPFGTVSED (102 aa)) form the FAD-binding FR-type domain. 365 to 371 (HPFTLTS) is a binding site for FAD. Residues 424–444 (VAVLVGAGIGVTPFASILKSI) traverse the membrane as a helical segment. The tract at residues 424-563 (VAVLVGAGIG…GVFLCGPRTL (140 aa)) is interaction with NOXO1. Over 445–591 (WYKFQRADNK…VQFYFNKETF (147 aa)) the chain is Cytoplasmic. At T457 the chain carries Phosphothreonine.

NOX1, NOXA1, NOXO1, RAC1 and CYBA forms a functional multimeric complex supporting ROS production. Interacts with NOXO1. Interacts (via FAD-binding FR-type domain) with ARHGEF7 (via PH domain). Interacts with NOXA1. FAD is required as a cofactor. In terms of processing, phosphorylation at Thr-457 mediated by PKC/PRKBC positively regulates its interaction with NOXA1 and enzyme activity. In terms of tissue distribution, expressed in colon and vascular smooth muscle cells (VSMC).

The protein resides in the cell projection. The protein localises to the invadopodium membrane. It localises to the cell membrane. It carries out the reaction NADPH + 2 O2 = 2 superoxide + NADP(+) + H(+). The oxidase activity is potentiated by NOXA1 and NOXO1. In terms of biological role, NADPH oxidase that catalyzes the generation of superoxide from molecular oxygen utilizing NADPH as an electron donor. The sequence is that of NADPH oxidase 1 (Nox1) from Mus musculus (Mouse).